The sequence spans 339 residues: Senescence-specific cysteine protease SAG39 (339 aa).

The first 23 residues, 1–23, serve as a signal peptide directing secretion; that stretch reads MAMAKALLFAILGCLCLCSAVLA. 3 disulfide bridges follow: Cys144–Cys187, Cys178–Cys220, and Cys276–Cys328. The active site involves Cys147. Catalysis depends on residues His282 and Asn303.

It belongs to the peptidase C1 family. In terms of tissue distribution, low expression in mature leaves.

The protein localises to the vacuole. Cysteine protease that may have a developmental senescence specific cell death function during apoptosis, heavy metal detoxification, and hypersensitive response. This chain is Senescence-specific cysteine protease SAG39, found in Oryza sativa subsp. japonica (Rice).